Reading from the N-terminus, the 231-residue chain is 2,3-bisphosphoglycerate-dependent phosphoglycerate mutase (231 aa).

Substrate-binding positions include 8–15 (RHGESEWN), 21–22 (TG), Arg-60, 87–90 (ERHY), Lys-98, 114–115 (RR), and 183–184 (GN). The Tele-phosphohistidine intermediate role is filled by His-9. The active-site Proton donor/acceptor is Glu-87.

It belongs to the phosphoglycerate mutase family. BPG-dependent PGAM subfamily.

It catalyses the reaction (2R)-2-phosphoglycerate = (2R)-3-phosphoglycerate. Its pathway is carbohydrate degradation; glycolysis; pyruvate from D-glyceraldehyde 3-phosphate: step 3/5. Its function is as follows. Catalyzes the interconversion of 2-phosphoglycerate and 3-phosphoglycerate. This is 2,3-bisphosphoglycerate-dependent phosphoglycerate mutase from Streptococcus pyogenes serotype M49 (strain NZ131).